Consider the following 644-residue polypeptide: 3D-(3,5/4)-trihydroxycyclohexane-1,2-dione hydrolase (644 aa).

E65 contributes to the thiamine diphosphate binding site. A thiamine pyrophosphate binding region spans residues 442–522; that stretch reads SLPGDLHKVW…INILLFDNAG (81 aa). Positions 493 and 520 each coordinate Mg(2+).

It belongs to the TPP enzyme family. The cofactor is Mg(2+). Requires thiamine diphosphate as cofactor.

The enzyme catalyses 3D-3,5/4-trihydroxycyclohexane-1,2-dione + H2O = 5-deoxy-D-glucuronate + H(+). It functions in the pathway polyol metabolism; myo-inositol degradation into acetyl-CoA; acetyl-CoA from myo-inositol: step 3/7. In terms of biological role, involved in the cleavage of the C1-C2 bond of 3D-(3,5/4)-trihydroxycyclohexane-1,2-dione (THcHDO) to yield 5-deoxy-glucuronate (5DG). The protein is 3D-(3,5/4)-trihydroxycyclohexane-1,2-dione hydrolase of Clostridium tetani (strain Massachusetts / E88).